Reading from the N-terminus, the 162-residue chain is Phosphopantetheine adenylyltransferase (162 aa).

Thr-10 lines the substrate pocket. ATP is bound by residues 10–11 and His-18; that span reads TF. Lys-42, Leu-74, and Arg-88 together coordinate substrate. Residues 89 to 91, Glu-99, and 124 to 130 contribute to the ATP site; these read GLR and FSCISST.

The protein belongs to the bacterial CoaD family. As to quaternary structure, homohexamer. The cofactor is Mg(2+).

The protein resides in the cytoplasm. It carries out the reaction (R)-4'-phosphopantetheine + ATP + H(+) = 3'-dephospho-CoA + diphosphate. The protein operates within cofactor biosynthesis; coenzyme A biosynthesis; CoA from (R)-pantothenate: step 4/5. In terms of biological role, reversibly transfers an adenylyl group from ATP to 4'-phosphopantetheine, yielding dephospho-CoA (dPCoA) and pyrophosphate. This chain is Phosphopantetheine adenylyltransferase, found in Francisella tularensis subsp. novicida (strain U112).